We begin with the raw amino-acid sequence, 574 residues long: Proline--tRNA ligase (574 aa).

This sequence belongs to the class-II aminoacyl-tRNA synthetase family. ProS type 1 subfamily. As to quaternary structure, homodimer.

It localises to the cytoplasm. It catalyses the reaction tRNA(Pro) + L-proline + ATP = L-prolyl-tRNA(Pro) + AMP + diphosphate. Catalyzes the attachment of proline to tRNA(Pro) in a two-step reaction: proline is first activated by ATP to form Pro-AMP and then transferred to the acceptor end of tRNA(Pro). As ProRS can inadvertently accommodate and process non-cognate amino acids such as alanine and cysteine, to avoid such errors it has two additional distinct editing activities against alanine. One activity is designated as 'pretransfer' editing and involves the tRNA(Pro)-independent hydrolysis of activated Ala-AMP. The other activity is designated 'posttransfer' editing and involves deacylation of mischarged Ala-tRNA(Pro). The misacylated Cys-tRNA(Pro) is not edited by ProRS. The protein is Proline--tRNA ligase of Hahella chejuensis (strain KCTC 2396).